Reading from the N-terminus, the 233-residue chain is Histone H1-I (233 aa).

Disordered regions lie at residues 1 to 55 (MSDS…HPPV) and 115 to 233 (TGAS…KKSK). A compositionally biased stretch (low complexity) spans 17–29 (KAATPAKSPAKSP). The region spanning 51–125 (THPPVSEMVV…GASGSFKMPP (75 aa)) is the H15 domain. Composition is skewed to basic and acidic residues over residues 128 to 137 (KKVDKPEAAP) and 144 to 155 (PKREIEKKEKKV). Composition is skewed to basic residues over residues 172–186 (AAKK…KKAA), 199–213 (SPKK…KPTP), and 223–233 (AAAKKPAKKSK).

Belongs to the histone H1/H5 family.

It is found in the nucleus. It localises to the chromosome. In terms of biological role, histones H1 are necessary for the condensation of nucleosome chains into higher-order structures. The polypeptide is Histone H1-I (Glyptotendipes salinus (Midge)).